Here is a 159-residue protein sequence, read N- to C-terminus: 3-dehydroquinate dehydratase (159 aa).

Tyrosine 22 serves as the catalytic Proton acceptor. Positions 73, 79, and 86 each coordinate substrate. Histidine 99 acts as the Proton donor in catalysis. Residues 100 to 101 and arginine 110 contribute to the substrate site; that span reads IS.

This sequence belongs to the type-II 3-dehydroquinase family. In terms of assembly, homododecamer.

The enzyme catalyses 3-dehydroquinate = 3-dehydroshikimate + H2O. It functions in the pathway metabolic intermediate biosynthesis; chorismate biosynthesis; chorismate from D-erythrose 4-phosphate and phosphoenolpyruvate: step 3/7. Catalyzes a trans-dehydration via an enolate intermediate. In Campylobacter jejuni subsp. doylei (strain ATCC BAA-1458 / RM4099 / 269.97), this protein is 3-dehydroquinate dehydratase.